Here is a 403-residue protein sequence, read N- to C-terminus: Serine/threonine transporter SstT (403 aa).

The next 8 helical transmembrane spans lie at 11-31 (GNLV…AFIS), 51-71 (AIAP…KEVG), 81-101 (VMYV…SFIF), 138-158 (ALAN…GIPL), 175-195 (AVSY…FGLV), 213-233 (LLGV…PILV), 285-305 (VAIP…VTVL), and 319-339 (FMTA…ASGV).

Belongs to the dicarboxylate/amino acid:cation symporter (DAACS) (TC 2.A.23) family.

The protein resides in the cell inner membrane. It catalyses the reaction L-serine(in) + Na(+)(in) = L-serine(out) + Na(+)(out). The enzyme catalyses L-threonine(in) + Na(+)(in) = L-threonine(out) + Na(+)(out). In terms of biological role, involved in the import of serine and threonine into the cell, with the concomitant import of sodium (symport system). The sequence is that of Serine/threonine transporter SstT from Haemophilus ducreyi (strain 35000HP / ATCC 700724).